The chain runs to 205 residues: Guanylate kinase (205 aa).

The Guanylate kinase-like domain maps to 7 to 185; the sequence is GNIFIISAAS…AEGDLLHIVN (179 aa). 14 to 21 lines the ATP pocket; it reads AASGTGKT.

Belongs to the guanylate kinase family.

The protein resides in the cytoplasm. The catalysed reaction is GMP + ATP = GDP + ADP. Its function is as follows. Essential for recycling GMP and indirectly, cGMP. The polypeptide is Guanylate kinase (Neisseria gonorrhoeae (strain ATCC 700825 / FA 1090)).